The primary structure comprises 148 residues: Putative nickel-responsive regulator (148 aa).

Residues H88, H99, H101, and C107 each coordinate Ni(2+).

It belongs to the transcriptional regulatory CopG/NikR family. Ni(2+) serves as cofactor.

Transcriptional regulator. This chain is Putative nickel-responsive regulator, found in Helicobacter pylori (strain P12).